Here is a 411-residue protein sequence, read N- to C-terminus: LIM domain-binding protein 1 (411 aa).

N-acetylserine is present on S2. T61 carries the post-translational modification Phosphothreonine. Residues S265 and S302 each carry the phosphoserine modification. 2 disordered regions span residues 284–330 (PPAE…TFAL) and 367–411 (DAAN…QASQ). The span at 302–318 (SGGSTMSSGGGNTNNSN) shows a compositional bias: low complexity. One can recognise an LIM interaction domain (LID) domain in the interval 336 to 375 (DVMVVGEPTLMGGEFGDEDERLITRLENTQFDAANGIDDE).

This sequence belongs to the LDB family. In terms of assembly, interacts with ESR1. Forms homodimers and heterodimers. Interacts with and activates LHX1/LIM1. Interacts with the LIM domains of ISL1 and LMO2. Can assemble in a complex with LMO2 and TAL1/SCL but does not interact with TAL1/SCL directly. Strongly interacts with the LIM2 domain of LMX1A and more weakly with the LIM1 domain. Homodimerization is not required for, and does not effect, LMX1A-binding. Component of a nuclear TAL-1 complex composed at least of CBFA2T3, LDB1, TAL1 and TCF3. Interacts with LHX6 and LHX9. At neuronal promoters, forms a complex with LHX3 involved in the specification of interneurons, in motor neurons, it is displaced by ISL1 to form a ternary complex in which ISL1 contacts both LHX3 and LDB1. Interacts with SLK; leading to negatively regulate SLK kinase activity. Interacts with YWHAZ. Interacts with PRDM1/BLIMP1. Interacts with LMO4. Interacts with RLIM/RNF12; the interaction inhibits the ubiquitination of LMO proteins. Ubiquitinated by RLIM/RNF12, leading to its degradation by the proteasome. As to expression, expressed in multiple adult tissues including heart, brain, liver, kidney, testis, lung and muscle, with expression highest in the pituitary gland and skin.

Its subcellular location is the nucleus. Functionally, binds to the LIM domain of a wide variety of LIM domain-containing transcription factors. May regulate the transcriptional activity of LIM-containing proteins by determining specific partner interactions. Plays a role in the development of interneurons and motor neurons in cooperation with LHX3 and ISL1. Acts synergistically with LHX1/LIM1 in axis formation and activation of gene expression. Acts with LMO2 in the regulation of red blood cell development, maintaining erythroid precursors in an immature state. The chain is LIM domain-binding protein 1 (Ldb1) from Mus musculus (Mouse).